The chain runs to 748 residues: E3 ubiquitin-protein ligase SMURF2 (748 aa).

The region spanning 1 to 119 (MSNPGGRRNG…TGYQRLDLCK (119 aa)) is the C2 domain. K119 is covalently cross-linked (Glycyl lysine isopeptide (Lys-Gly) (interchain with G-Cter in ubiquitin)). WW domains are found at residues 157–190 (NDLP…RPTR), 251–284 (PDLP…DPRV), and 297–330 (GPLP…DPRL). The HECT domain occupies 414 to 748 (RPKDLWKRLM…IEETCGFAVE (335 aa)). C716 acts as the Glycyl thioester intermediate in catalysis.

In terms of assembly, interacts (via WW domains) with SMAD1. Interacts (via WW domains) with SMAD2 (via PY-motif). Interacts (via WW domains) with SMAD3 (via PY-motif). Interacts with SMAD6. Interacts with SMAD7 (via PY-motif) and TGFBR1; SMAD7 recruits SMURF2 to the TGF-beta receptor and regulates its degradation. Does not interact with SMAD4; SMAD4 lacks a PY-motif. Interacts with AIMP1. Interacts with SNON. Interacts with STAMBP and RNF11. May interact with NDFIP1 and NDFIP2; this interaction induces the E3 ubiquitin-protein ligase activity. Interacts with TTC3. As to quaternary structure, (Microbial infection) Interacts (via WW domains) with EBOV and MARV VP40 (via PPXY motif); the interaction facilitates VP40 virus-like particle budding. Post-translationally, auto-ubiquitinated and ubiquitinated in the presence of RNF11 and UBE2D1. Ubiquitinated by the SCF(FBXL15) complex and TTC3, leading to its degradation by the proteasome. 'Lys-48'-linked polyubiquitination mediated by TRAF4 at Lys-119 leads to SMURF2 proteasomal degradation. As to expression, widely expressed.

It localises to the nucleus. The protein localises to the cytoplasm. The protein resides in the cell membrane. Its subcellular location is the membrane raft. It carries out the reaction S-ubiquitinyl-[E2 ubiquitin-conjugating enzyme]-L-cysteine + [acceptor protein]-L-lysine = [E2 ubiquitin-conjugating enzyme]-L-cysteine + N(6)-ubiquitinyl-[acceptor protein]-L-lysine.. Its pathway is protein modification; protein ubiquitination. Its activity is regulated as follows. Activated by NDFIP1- and NDFIP2-binding. Functionally, E3 ubiquitin-protein ligase which accepts ubiquitin from an E2 ubiquitin-conjugating enzyme in the form of a thioester and then directly transfers the ubiquitin to targeted substrates. Interacts with SMAD7 to trigger SMAD7-mediated transforming growth factor beta/TGF-beta receptor ubiquitin-dependent degradation, thereby down-regulating TGF-beta signaling. In addition, interaction with SMAD7 activates autocatalytic degradation, which is prevented by interaction with AIMP1. Also forms a stable complex with TGF-beta receptor-mediated phosphorylated SMAD1, SMAD2 and SMAD3, and targets SMAD1 and SMAD2 for ubiquitination and proteasome-mediated degradation. SMAD2 may recruit substrates, such as SNON, for ubiquitin-dependent degradation. Negatively regulates TGFB1-induced epithelial-mesenchymal transition and myofibroblast differentiation. In terms of biological role, (Microbial infection) In case of filoviruses Ebola/EBOV and Marburg/MARV infection, the complex formed by viral matrix protein VP40 and SMURF2 facilitates virus budding. The sequence is that of E3 ubiquitin-protein ligase SMURF2 from Homo sapiens (Human).